A 342-amino-acid polypeptide reads, in one-letter code: Heat-inducible transcription repressor HrcA (342 aa).

This sequence belongs to the HrcA family.

Functionally, negative regulator of class I heat shock genes (grpE-dnaK-dnaJ and groELS operons). Prevents heat-shock induction of these operons. The protein is Heat-inducible transcription repressor HrcA of Oceanobacillus iheyensis (strain DSM 14371 / CIP 107618 / JCM 11309 / KCTC 3954 / HTE831).